We begin with the raw amino-acid sequence, 379 residues long: Tetraacyldisaccharide 4'-kinase (379 aa).

63 to 70 (AVGGAGKT) contacts ATP.

It belongs to the LpxK family.

It catalyses the reaction a lipid A disaccharide + ATP = a lipid IVA + ADP + H(+). The protein operates within glycolipid biosynthesis; lipid IV(A) biosynthesis; lipid IV(A) from (3R)-3-hydroxytetradecanoyl-[acyl-carrier-protein] and UDP-N-acetyl-alpha-D-glucosamine: step 6/6. Functionally, transfers the gamma-phosphate of ATP to the 4'-position of a tetraacyldisaccharide 1-phosphate intermediate (termed DS-1-P) to form tetraacyldisaccharide 1,4'-bis-phosphate (lipid IVA). The chain is Tetraacyldisaccharide 4'-kinase from Anaeromyxobacter dehalogenans (strain 2CP-1 / ATCC BAA-258).